The sequence spans 416 residues: uncharacterized protein (416 aa).

This is an uncharacterized protein from Methanocaldococcus jannaschii (strain ATCC 43067 / DSM 2661 / JAL-1 / JCM 10045 / NBRC 100440) (Methanococcus jannaschii).